Consider the following 537-residue polypeptide: Phosphoenolpyruvate carboxykinase (ATP) (537 aa).

The substrate site is built by Arg61, Tyr194, and Lys200. ATP-binding positions include Lys200, His219, and 235–243; that span reads GLSGTGKTT. Mn(2+) is bound by residues Lys200 and His219. Residue Asp256 participates in Mn(2+) binding. Positions 284, 322, and 448 each coordinate ATP. Position 322 (Arg322) interacts with substrate.

It belongs to the phosphoenolpyruvate carboxykinase (ATP) family. It depends on Mn(2+) as a cofactor.

The protein resides in the cytoplasm. It carries out the reaction oxaloacetate + ATP = phosphoenolpyruvate + ADP + CO2. Its pathway is carbohydrate biosynthesis; gluconeogenesis. Functionally, involved in the gluconeogenesis. Catalyzes the conversion of oxaloacetate (OAA) to phosphoenolpyruvate (PEP) through direct phosphoryl transfer between the nucleoside triphosphate and OAA. This is Phosphoenolpyruvate carboxykinase (ATP) from Bradyrhizobium sp. (strain BTAi1 / ATCC BAA-1182).